The sequence spans 797 residues: Complex I intermediate-associated protein 84, mitochondrial (797 aa).

The transit peptide at 1-69 (MRSHLARNAT…ALCTRTSKRT (69 aa)) directs the protein to the mitochondrion.

Its subcellular location is the mitochondrion. Its function is as follows. Chaperone protein involved in the assembly of the mitochondrial NADH:ubiquinone oxidoreductase complex (complex I). This is Complex I intermediate-associated protein 84, mitochondrial (cia84) from Neurospora crassa (strain ATCC 24698 / 74-OR23-1A / CBS 708.71 / DSM 1257 / FGSC 987).